Here is a 151-residue protein sequence, read N- to C-terminus: Neuroglobin (151 aa).

The 149-residue stretch at 1–149 folds into the Globin domain; that stretch reads MERPEPELIR…VVQAMSRGWD (149 aa). Cysteine 46 and cysteine 55 form a disulfide bridge. Positions 64 and 96 each coordinate heme b.

The protein belongs to the globin family. Monomer. Homodimer and homotetramer; disulfide-linked. Mainly monomeric but also detected as part of homodimers and homotetramers. Interacts with 14-3-3 proteins; regulates the phosphorylation of NGB. Could interact (ferrous form) with G-alpha(i) proteins (GTP-bound form). Phosphorylated during hypoxia by ERK1/ERK2. Phosphorylation regulates the heme pocket hexacoordination preventing the association of His-64 with the heme metal center. Thereby, promotes the access of dioxygen and nitrite to the heme and stimulates the nitrite reductase activity. Phosphorylation during hypoxia is stabilized by 14-3-3 proteins. Post-translationally, an intramolecular Cys-46/Cys-55 disulfide bond, not necessarily present in orthologs, regulates the heme pocket hexacoordination preventing the association of His-64 with the heme metal center. Thereby, promotes the access of dioxygen and nitrite to the heme and stimulates the nitrite reductase activity. In terms of tissue distribution, predominantly expressed in brain, the strongest expression is seen in the frontal lobe, the subthalamic nucleus and the thalamus.

It is found in the cytoplasm. The protein localises to the cytosol. It localises to the mitochondrion matrix. The enzyme catalyses Fe(III)-heme b-[protein] + nitric oxide + H2O = Fe(II)-heme b-[protein] + nitrite + 2 H(+). Functionally, monomeric globin with a bis-histidyl six-coordinate heme-iron atom through which it can bind dioxygen, carbon monoxide and nitric oxide. Could help transport oxygen and increase its availability to the metabolically active neuronal tissues, though its low quantity in tissues as well as its high affinity for dioxygen, which may limit its oxygen-releasing ability, argue against it. The ferrous/deoxygenated form exhibits a nitrite reductase activity and it could produce nitric oxide which in turn inhibits cellular respiration in response to hypoxia. In its ferrous/deoxygenated state, it may also exhibit GDI (Guanine nucleotide Dissociation Inhibitor) activity toward heterotrimeric G-alpha proteins, thereby regulating signal transduction to facilitate neuroprotective responses in the wake of hypoxia and associated oxidative stress. This chain is Neuroglobin, found in Homo sapiens (Human).